Here is a 161-residue protein sequence, read N- to C-terminus: Anaerobic nitrite reductase GLB1 (161 aa).

Residues 9–157 (VFTEEQEALV…LVAAIKSEMK (149 aa)) form the Globin domain. A Homodimerization motif is present at residues 42–46 (EIAPS). Residues Ser-52, Lys-66, His-70, Arg-100, and His-105 each coordinate heme b. The short motif at 112-123 (NEHFETRFALLE) is the Homodimerization element.

It belongs to the plant globin family. Homodimer. Heme b is required as a cofactor. Root specific.

Its subcellular location is the cytoplasm. It localises to the nucleus. It carries out the reaction Fe(III)-heme b-[protein] + nitric oxide + H2O = Fe(II)-heme b-[protein] + nitrite + 2 H(+). In terms of biological role, phytoglobin that reduces nitrite to nitric oxide (NO) under anoxic conditions (e.g. during flooding or in waterlogged soil) and upon root nodulation. Required for general plant development and during nodulation, especially for the onset of symbiosis. Monitors nitric oxide (NO) levels during early phase of the nitrogen-fixing symbiosis and buffers oxygen in functioning nodules. May not function as an oxygen storage or transport protein. Has an unusually high affinity for O(2) through a hexacoordinate heme iron because of a very low dissociation constant. The polypeptide is Anaerobic nitrite reductase GLB1 (GLB1) (Trema tomentosum (Peach-leaf poison-bush)).